The chain runs to 359 residues: Peptide methionine sulfoxide reductase MsrA/MsrB (359 aa).

The tract at residues 36 to 189 (RVIYLAGGCF…PGGYCHIDLK (154 aa)) is peptide methionine sulfoxide reductase A. Cys-44 is an active-site residue. A MsrB domain is found at 206–329 (DEVLKKKLTK…NSAALRFIPL (124 aa)). The active-site Nucleophile is Cys-318.

It in the N-terminal section; belongs to the MsrA Met sulfoxide reductase family. This sequence in the C-terminal section; belongs to the MsrB Met sulfoxide reductase family.

It carries out the reaction L-methionyl-[protein] + [thioredoxin]-disulfide + H2O = L-methionyl-(S)-S-oxide-[protein] + [thioredoxin]-dithiol. The enzyme catalyses [thioredoxin]-disulfide + L-methionine + H2O = L-methionine (S)-S-oxide + [thioredoxin]-dithiol. It catalyses the reaction L-methionyl-[protein] + [thioredoxin]-disulfide + H2O = L-methionyl-(R)-S-oxide-[protein] + [thioredoxin]-dithiol. Its function is as follows. Has an important function as a repair enzyme for proteins that have been inactivated by oxidation. Catalyzes the reversible oxidation-reduction of methionine sulfoxide in proteins to methionine. The chain is Peptide methionine sulfoxide reductase MsrA/MsrB (msrAB) from Helicobacter pylori (strain J99 / ATCC 700824) (Campylobacter pylori J99).